The chain runs to 726 residues: Sensory/regulatory protein RpfC (726 aa).

At 1-22 the chain is on the periplasmic side; that stretch reads MKSPLPWLKRRLSGRADSEHAQ. The interval 1–22 is sensor; it reads MKSPLPWLKRRLSGRADSEHAQ. Residues 23–40 traverse the membrane as a helical segment; the sequence is NLIRIIITTLFISYLGWR. The Cytoplasmic portion of the chain corresponds to 41–51; the sequence is YQHTHGDTLMA. A helical transmembrane segment spans residues 52 to 72; that stretch reads TWLILVGELLVSLGLMVAILL. Residues 73-94 lie on the Periplasmic side of the membrane; the sequence is RPQVSHTRRLIGMLLDYTCTGA. Residues 95-115 traverse the membrane as a helical segment; sequence IMAIQGEPASPLYAVCMWVTI. The Cytoplasmic segment spans residues 116–127; it reads GNGLRYGSNYLR. Residues 128–148 form a helical membrane-spanning segment; the sequence is AATAMGSLCFLGAILISPYWK. Over 149–151 the chain is Periplasmic; it reads ANP. The chain crosses the membrane as a helical span at residues 152–172; it reads YLSWGLLLGLIAVPLYFDSLL. At 173–726 the chain is on the cytoplasmic side; sequence RAMTRAVREA…DGECSPRSNE (554 aa). The 223-residue stretch at 195 to 417 folds into the Histidine kinase domain; it reads NMSHEFRTPL…VFWFELPMAI (223 aa). His198 carries the phosphohistidine; by autocatalysis modification. The region spanning 463-581 is the Response regulatory domain; it reads RMLVADDHEA…KLLDTLADLA (119 aa). Residue Asp512 is modified to 4-aspartylphosphate. One can recognise an HPt domain in the interval 618-711; sequence GEEFERQFVR…KAGKDALDAR (94 aa). His657 carries the phosphohistidine modification.

In terms of assembly, at low DSF concentrations, interacts with RpfF. Autophosphorylated. Activation may require a sequential transfer of a phosphate group from a His in the primary transmitter domain, to an Asp in the receiver domain and to a His in the secondary transmitter domain.

Its subcellular location is the cell inner membrane. It carries out the reaction ATP + protein L-histidine = ADP + protein N-phospho-L-histidine.. Binding of DSF to the sensor region causes allosteric change, which facilitates RpfC autophosphorylation. Hybrid sensor kinase that regulates diverse biological functions through two distinct molecular mechanisms. At low cell density, the extracellular concentration of the diffusible signaling factor (DSF) is below a threshold, and unphosphorylated RpfC is involved in the negative regulation of DSF synthesis, via direct interaction with the DSF synthase RpfF. Interaction prevents synthesis of DSF, which remains at a basal level. This activity does not involve the phosphorelay mechanism and is not dependent on RpfG. Is also member of the two-component regulatory system RpfG/RpfC, which is involved in the perception and response to DSF, which is essential for cell-cell signaling. At high cell density, the level of extracellular DSF increases and binding of DSF to the sensor region of RpfC causes autophosphorylation of RpfC, which results in the release of RpfF and the activation of RpfG via a four-step phosphorelay. Activation of RpfG leads to the positive regulation of biofilm dispersal and the production of virulence factors. This chain is Sensory/regulatory protein RpfC (rpfC), found in Xanthomonas campestris pv. campestris (strain 8004).